Reading from the N-terminus, the 345-residue chain is Nicotinate-nucleotide--dimethylbenzimidazole phosphoribosyltransferase (345 aa).

Glu-312 functions as the Proton acceptor in the catalytic mechanism.

This sequence belongs to the CobT family.

The catalysed reaction is 5,6-dimethylbenzimidazole + nicotinate beta-D-ribonucleotide = alpha-ribazole 5'-phosphate + nicotinate + H(+). Its pathway is nucleoside biosynthesis; alpha-ribazole biosynthesis; alpha-ribazole from 5,6-dimethylbenzimidazole: step 1/2. Functionally, catalyzes the synthesis of alpha-ribazole-5'-phosphate from nicotinate mononucleotide (NAMN) and 5,6-dimethylbenzimidazole (DMB). The chain is Nicotinate-nucleotide--dimethylbenzimidazole phosphoribosyltransferase from Bacteroides fragilis (strain ATCC 25285 / DSM 2151 / CCUG 4856 / JCM 11019 / LMG 10263 / NCTC 9343 / Onslow / VPI 2553 / EN-2).